A 349-amino-acid chain; its full sequence is N-formyl peptide receptor 3 (349 aa).

The Extracellular portion of the chain corresponds to 1 to 27 (METNFSIPLNESEEVLPEPAGHTVLWI). N-linked (GlcNAc...) asparagine glycosylation is found at Asn-4 and Asn-10. A helical transmembrane segment spans residues 28–50 (FSLLVHGVTFIFGVLGNGLVIWV). The Cytoplasmic segment spans residues 51–61 (AGFRMTRTVNT). The chain crosses the membrane as a helical span at residues 62 to 83 (ICYLNLALADFSFSAILPFRMV). Residues 84–100 (SVAMREKWPFGTFLCKL) are Extracellular-facing. Cys-98 and Cys-176 are oxidised to a cystine. A helical membrane pass occupies residues 101–121 (VHVMIDINLFVSVYLITIIAL). The Cytoplasmic segment spans residues 122–140 (DRCICVLHPAWAQNHRTMS). A helical transmembrane segment spans residues 141-162 (LAKRVMMGLWILAIVLTLPNFI). Over 163-205 (FWTTISTKNGDTYCIFNFPFWGDTAVERLNAFITMGKVFLILH) the chain is Extracellular. Residues 206-226 (FIIGFSMPMSIITVCYGIIAA) traverse the membrane as a helical segment. Residues 227 to 242 (KIHRNHMIKSSSPLRV) lie on the Cytoplasmic side of the membrane. Residues 243–266 (FAAVVASFFICWFPYELIGILMAV) traverse the membrane as a helical segment. At 267-286 (WLKEMLLNGKYKIILVLLNP) the chain is on the extracellular side. A helical transmembrane segment spans residues 287–306 (TSSLAFFNSCLNPILYVFLG). Over 307–349 (SNFQERLIRSLPTSLERALTEVPDSAQTSNTHTNSASPPEETE) the chain is Cytoplasmic. A disordered region spans residues 328 to 349 (VPDSAQTSNTHTNSASPPEETE). The segment covering 331–343 (SAQTSNTHTNSAS) has biased composition (polar residues).

This sequence belongs to the G-protein coupled receptor 1 family.

The protein localises to the cell membrane. Functionally, low affinity receptor for N-formyl-methionyl peptides, which are powerful neutrophils chemotactic factors. Binding of FMLP to the receptor causes activation of neutrophils. This response is mediated via a G-protein that activates a phosphatidylinositol-calcium second messenger system. The sequence is that of N-formyl peptide receptor 3 (FPR3) from Pongo pygmaeus (Bornean orangutan).